We begin with the raw amino-acid sequence, 111 residues long: Large ribosomal subunit protein uL22 (111 aa).

This sequence belongs to the universal ribosomal protein uL22 family. Part of the 50S ribosomal subunit.

In terms of biological role, this protein binds specifically to 23S rRNA; its binding is stimulated by other ribosomal proteins, e.g. L4, L17, and L20. It is important during the early stages of 50S assembly. It makes multiple contacts with different domains of the 23S rRNA in the assembled 50S subunit and ribosome. The globular domain of the protein is located near the polypeptide exit tunnel on the outside of the subunit, while an extended beta-hairpin is found that lines the wall of the exit tunnel in the center of the 70S ribosome. The polypeptide is Large ribosomal subunit protein uL22 (Stenotrophomonas maltophilia (strain R551-3)).